The sequence spans 259 residues: Probable WRKY transcription factor 65 (259 aa).

Over residues 1 to 17 the composition is skewed to basic and acidic residues; the sequence is MKRGLDMARSYNDHESS. 2 disordered regions span residues 1–101 and 126–165; these read MKRG…RCSS and TSEH…EEED. Residues 18–31 show a composition bias toward polar residues; it reads QETGPESPNSSTFN. Residues 47-69 show a composition bias toward basic and acidic residues; that stretch reads RSVEKRVVNVPMKEMEGSRHKGD. Positions 68 to 134 form a DNA-binding region, WRKY; that stretch reads GDTTPPSDSW…YTSEHNHPWP (67 aa). Residues 154-165 show a composition bias toward acidic residues; the sequence is EPEVEPEAEEED.

It localises to the nucleus. Transcription factor. Interacts specifically with the W box (5'-(T)TGAC[CT]-3'), a frequently occurring elicitor-responsive cis-acting element. The protein is Probable WRKY transcription factor 65 (WRKY65) of Arabidopsis thaliana (Mouse-ear cress).